The following is a 447-amino-acid chain: Tubulin beta chain (447 aa).

GTP is bound by residues Gln11, Glu69, Ser138, Gly142, Thr143, Gly144, Asn204, and Asn226. Position 69 (Glu69) interacts with Mg(2+). The segment at 424–447 (QYQEASVSEGEEEYDEEAPLEAEE) is disordered. Residues 432–447 (EGEEEYDEEAPLEAEE) show a composition bias toward acidic residues.

It belongs to the tubulin family. As to quaternary structure, dimer of alpha and beta chains. A typical microtubule is a hollow water-filled tube with an outer diameter of 25 nm and an inner diameter of 15 nM. Alpha-beta heterodimers associate head-to-tail to form protofilaments running lengthwise along the microtubule wall with the beta-tubulin subunit facing the microtubule plus end conferring a structural polarity. Microtubules usually have 13 protofilaments but different protofilament numbers can be found in some organisms and specialized cells. Mg(2+) serves as cofactor.

Its subcellular location is the cytoplasm. It is found in the cytoskeleton. Tubulin is the major constituent of microtubules, a cylinder consisting of laterally associated linear protofilaments composed of alpha- and beta-tubulin heterodimers. Microtubules grow by the addition of GTP-tubulin dimers to the microtubule end, where a stabilizing cap forms. Below the cap, tubulin dimers are in GDP-bound state, owing to GTPase activity of alpha-tubulin. This is Tubulin beta chain (TUB1) from Cochliobolus heterostrophus (Southern corn leaf blight fungus).